The chain runs to 174 residues: MALHDFVKIDKSRFEDAVKAYFLWKELNALIKNSHNRGINFPETISETLLCAAMGFELNRGTGGDAREPKTQAIIESKATSNWDRDTTSFSPSENFDALYFLRLNQRDDELYIYNTGINSDDLKSIQVNKTQTLGDQQAQGRRPRFSVIKFIIEANDIEPVAKVELRTKKIIKL.

It carries out the reaction Endonucleolytic cleavage of DNA to give specific double-stranded fragments with terminal 5'-phosphates.. A P subtype restriction enzyme that recognizes the double-stranded sequence 5'-GCNGC-3' and cleaves after C-2. In Bacillus sp. (strain RFL6), this protein is Type II restriction enzyme Bsp6I.